The following is a 251-amino-acid chain: Hydroxyacylglutathione hydrolase (251 aa).

Histidine 53, histidine 55, aspartate 57, histidine 58, histidine 110, aspartate 127, and histidine 165 together coordinate Zn(2+).

It belongs to the metallo-beta-lactamase superfamily. Glyoxalase II family. As to quaternary structure, monomer. Requires Zn(2+) as cofactor.

The enzyme catalyses an S-(2-hydroxyacyl)glutathione + H2O = a 2-hydroxy carboxylate + glutathione + H(+). It functions in the pathway secondary metabolite metabolism; methylglyoxal degradation; (R)-lactate from methylglyoxal: step 2/2. Thiolesterase that catalyzes the hydrolysis of S-D-lactoyl-glutathione to form glutathione and D-lactic acid. The sequence is that of Hydroxyacylglutathione hydrolase from Salmonella agona (strain SL483).